A 296-amino-acid chain; its full sequence is NAD kinase (296 aa).

Aspartate 72 acts as the Proton acceptor in catalysis. Residues 72 to 73, 146 to 147, arginine 157, lysine 174, aspartate 176, 187 to 192, and glutamine 247 each bind NAD(+); these read DG, ND, and TAYALS.

The protein belongs to the NAD kinase family. It depends on a divalent metal cation as a cofactor.

It localises to the cytoplasm. It catalyses the reaction NAD(+) + ATP = ADP + NADP(+) + H(+). Functionally, involved in the regulation of the intracellular balance of NAD and NADP, and is a key enzyme in the biosynthesis of NADP. Catalyzes specifically the phosphorylation on 2'-hydroxyl of the adenosine moiety of NAD to yield NADP. The sequence is that of NAD kinase from Pseudomonas entomophila (strain L48).